A 246-amino-acid polypeptide reads, in one-letter code: Type III pantothenate kinase (246 aa).

6 to 13 lines the ATP pocket; it reads DVGNSRIK. Residues Y93 and 100–103 each bind substrate; that span reads GSDR. D102 serves as the catalytic Proton acceptor. Residue T125 coordinates ATP. T175 contributes to the substrate binding site.

The protein belongs to the type III pantothenate kinase family. In terms of assembly, homodimer. NH4(+) is required as a cofactor. It depends on K(+) as a cofactor.

It is found in the cytoplasm. It catalyses the reaction (R)-pantothenate + ATP = (R)-4'-phosphopantothenate + ADP + H(+). Its pathway is cofactor biosynthesis; coenzyme A biosynthesis; CoA from (R)-pantothenate: step 1/5. Its function is as follows. Catalyzes the phosphorylation of pantothenate (Pan), the first step in CoA biosynthesis. The sequence is that of Type III pantothenate kinase from Dichelobacter nodosus (strain VCS1703A).